The primary structure comprises 2145 residues: Mediator of RNA polymerase II transcription subunit 12-like protein (2145 aa).

Positions 1–30 (MAAFGLLSYEQRPLKRPRLGPPDVYPQDPK) are disordered. Threonine 462 is modified (phosphothreonine). Basic and acidic residues predominate over residues 1436 to 1455 (ELEKGQHLGSSSKKERDRQK). Disordered regions lie at residues 1436 to 1460 (ELEK…KSMS), 1721 to 1802 (RSYY…ISSQ), and 2029 to 2145 (DAVL…PSHF). The span at 1768–1777 (TKGRKRKTKS) shows a compositional bias: basic residues. The span at 2052-2069 (RQPQVRQQQRLLQMQQPQ) shows a compositional bias: low complexity. The segment covering 2070–2079 (QPQPQQPPQP) has biased composition (pro residues). Residues 2089–2099 (TLGLQAMQPQQ) are compositionally biased toward polar residues. Residues 2104–2124 (RQGLQQTQQQQQTAALVRQLQ) are compositionally biased toward low complexity. The span at 2125 to 2136 (KQLSSNQPQQGV) shows a compositional bias: polar residues.

Belongs to the Mediator complex subunit 12 family. May be a component of the Mediator complex, which is known to be composed of MED1, MED4, MED6, MED7, MED8, MED9, MED10, MED11, MED12, MED13, MED13L, MED14, MED15, MED16, MED17, MED18, MED19, MED20, MED21, MED22, MED23, MED24, MED25, MED26, MED27, MED29, MED30, MED31, CCNC, CDK8 and CDC2L6/CDK11. The MED12, MED13, CCNC and CDK8 subunits form a distinct module termed the CDK8 module. Mediator containing the CDK8 module is less active than Mediator lacking this module in supporting transcriptional activation. Individual preparations of the Mediator complex lacking one or more distinct subunits have been variously termed ARC, CRSP, DRIP, PC2, SMCC and TRAP.

The protein resides in the nucleus. Its function is as follows. May be a component of the Mediator complex, a coactivator involved in the regulated transcription of nearly all RNA polymerase II-dependent genes. Mediator functions as a bridge to convey information from gene-specific regulatory proteins to the basal RNA polymerase II transcription machinery. Mediator is recruited to promoters by direct interactions with regulatory proteins and serves as a scaffold for the assembly of a functional preinitiation complex with RNA polymerase II and the general transcription factors. The protein is Mediator of RNA polymerase II transcription subunit 12-like protein (MED12L) of Homo sapiens (Human).